The chain runs to 425 residues: Orexin/Hypocretin receptor type 1 (425 aa).

The Extracellular portion of the chain corresponds to 1–46 (MEPSATPGPQMGVPTGVGDPSLVPPDYEEEFLSYLWRDYLYPKQYE). The segment at 26 to 41 (DYEEEFLSYLWRDYLY) is required for response to orexin-A. Residues 47–67 (WVLIAAYVAVFLVALVGNTLV) form a helical membrane-spanning segment. Residues 68–82 (CLAVWRNHHMRTVTN) lie on the Cytoplasmic side of the membrane. Residues 83 to 105 (YFIVNLSLADVLVTAICLPASLL) form a helical membrane-spanning segment. At 106 to 119 (VDITESWLFGHALC) the chain is on the extracellular side. A disulfide bond links cysteine 119 and cysteine 202. The helical transmembrane segment at 120-140 (KVIPYLQAVSVSVAVLTLSFI) threads the bilayer. The Cytoplasmic segment spans residues 141–160 (ALDRWYAIYHPLLFKSTARR). The helical transmembrane segment at 161 to 182 (ARGSILGIWAVSPAVMVPQAAV) threads the bilayer. Over 183-213 (MECSSVLPELANRTRLFSVCDERWADDLYPK) the chain is Extracellular. A helical membrane pass occupies residues 214–235 (IYHSCFFIVTYLAPLGLMAMAY). The Cytoplasmic segment spans residues 236–298 (FQIFRKLWGR…QMRARRKTAK (63 aa)). The chain crosses the membrane as a helical span at residues 299 to 321 (MLMVVLLVFALCYLPISVLNVLK). The Extracellular segment spans residues 322 to 336 (RVFGMFRQTSDREAV). The chain crosses the membrane as a helical span at residues 337-360 (YACFTFSHWLVYANSAANPIIYNF). Topologically, residues 361–425 (LSGKFREQFK…VLTSVTTVLP (65 aa)) are cytoplasmic.

This sequence belongs to the G-protein coupled receptor 1 family.

It localises to the cell membrane. Functionally, moderately selective excitatory receptor for orexin-A and, with a lower affinity, for orexin-B neuropeptide. Triggers an increase in cytoplasmic Ca(2+) levels in response to orexin-A binding. The polypeptide is Orexin/Hypocretin receptor type 1 (Sus scrofa (Pig)).